A 310-amino-acid polypeptide reads, in one-letter code: Tagatose-6-phosphate kinase (310 aa).

The protein belongs to the carbohydrate kinase PfkB family. LacC subfamily.

It carries out the reaction D-tagatofuranose 6-phosphate + ATP = D-tagatofuranose 1,6-bisphosphate + ADP + H(+). It functions in the pathway carbohydrate metabolism; D-tagatose 6-phosphate degradation; D-glyceraldehyde 3-phosphate and glycerone phosphate from D-tagatose 6-phosphate: step 1/2. In Streptococcus mutans serotype c (strain ATCC 700610 / UA159), this protein is Tagatose-6-phosphate kinase.